The sequence spans 258 residues: Large ribosomal subunit protein eL8z (258 aa).

Residues 1–20 form a disordered region; it reads MAPKRGGRAPVPAKKKTEKV.

It belongs to the eukaryotic ribosomal protein eL8 family.

The protein is Large ribosomal subunit protein eL8z (RPL7A-1) of Oryza sativa subsp. japonica (Rice).